The sequence spans 90 residues: DNA-binding protein HU-alpha (90 aa).

Belongs to the bacterial histone-like protein family. In terms of assembly, heterodimer of an alpha and a beta chain.

Its function is as follows. Histone-like DNA-binding protein which is capable of wrapping DNA to stabilize it, and thus to prevent its denaturation under extreme environmental conditions. This is DNA-binding protein HU-alpha (hupA) from Serratia marcescens.